Reading from the N-terminus, the 105-residue chain is Resistin-like beta (105 aa).

A signal peptide spans 1–23; it reads MKPTLCFLFILVSLFPLIVPGNA. Disulfide bonds link C49-C102, C61-C101, C70-C87, C72-C89, and C76-C91.

It belongs to the resistin/FIZZ family. In terms of assembly, homodimer; disulfide-linked. Heterodimer with RETNLG. Strongly expressed in colon, and at lower levels in ileum. In colon, found throughout the crypt and surface epithelium and in goblet cells (at protein level). Specific to the gastrointestinal tract; not detected in other tissues tested.

It localises to the secreted. Probable hormone. The protein is Resistin-like beta (Retnlb) of Mus musculus (Mouse).